A 685-amino-acid chain; its full sequence is MTRKILVTSALPYANGSIHLGHMVEHIQTDVWVRFQKLRGNECHYCCADDTHGTPVMLAAQKQGIAPEDMIAKVREEHLADFTGFFIGYDNYYSTHSPENKQFSQDIYRALKANGKIESRVIEQLFDPEKQMFLPDRFVKGECPKCHAQDQYGDNCEVCGTTYSPTELINPYSAVSGAKPELRESEHFFFKLGECADFLKAWTSGNNPHDGKPHLQAEALNKMKEWLGEGEETTLSDWDISRDAPYFGFEIPDAPGKYFYVWLDAPVGYMASFKNLCDRIGVDFDEYFKAGSQTEMYHFIGKDILYFHALFWPAMLHFSGHRAPTGVYAHGFLTVDGQKMSKSRGTFITAKSYLEQGLNPEWMRYYIAAKLNSKIEDIDLNLQDFISRVNSDLVGKYVNIAARASGFIAKRFEGRLKDVADSALLAKLAAESDTIAEQYENREYARALRDIMALADAVNEYVDANKPWELAKQEGQDERLHEVCSELINAFTMLTAYLAPVLPQTAANAAKFLNLEAITWANTRETLGKHAINKYKHLMQRVEQKQVDDLIEANKQSIAAAAAPAAEESKYEKVAEQASFDDFMKIDMRVAKVLNCEAVEGSTKLLKFDLDFGFEQRIIFSGIAASYLNPAELNGRMVIAVANFAPRKMAKFGVSEGMILSAATADGKLKLLDVDAGAQPGDKVG.

The short motif at Pro-12–His-22 is the 'HIGH' region element. Residues Cys-143, Cys-146, Cys-156, and Cys-159 each coordinate Zn(2+). The short motif at Lys-339 to Ser-343 is the 'KMSKS' region element. Lys-342 is a binding site for ATP. Residues Asp-582–Gly-685 form the tRNA-binding domain.

It belongs to the class-I aminoacyl-tRNA synthetase family. MetG type 1 subfamily. In terms of assembly, homodimer. Requires Zn(2+) as cofactor.

Its subcellular location is the cytoplasm. It catalyses the reaction tRNA(Met) + L-methionine + ATP = L-methionyl-tRNA(Met) + AMP + diphosphate. Its function is as follows. Is required not only for elongation of protein synthesis but also for the initiation of all mRNA translation through initiator tRNA(fMet) aminoacylation. In Neisseria meningitidis serogroup C (strain 053442), this protein is Methionine--tRNA ligase.